Consider the following 341-residue polypeptide: Glyceraldehyde-3-phosphate dehydrogenase 2 (341 aa).

Residues Arg12 to Ile13, Arg78, and Thr120 contribute to the NAD(+) site. D-glyceraldehyde 3-phosphate is bound by residues Ser152 to Thr154 and Thr183. Cys153 serves as the catalytic Nucleophile. Residue Asn184 participates in NAD(+) binding. D-glyceraldehyde 3-phosphate is bound by residues Arg198, Thr211–Gly212, and Arg234. NAD(+) is bound at residue Asn313.

Belongs to the glyceraldehyde-3-phosphate dehydrogenase family. As to quaternary structure, homotetramer.

It is found in the cytoplasm. It catalyses the reaction D-glyceraldehyde 3-phosphate + phosphate + NAD(+) = (2R)-3-phospho-glyceroyl phosphate + NADH + H(+). It functions in the pathway carbohydrate degradation; glycolysis; pyruvate from D-glyceraldehyde 3-phosphate: step 1/5. In terms of biological role, catalyzes the oxidative phosphorylation of glyceraldehyde 3-phosphate (G3P) to 1,3-bisphosphoglycerate (BPG) using the cofactor NAD. The first reaction step involves the formation of a hemiacetal intermediate between G3P and a cysteine residue, and this hemiacetal intermediate is then oxidized to a thioester, with concomitant reduction of NAD to NADH. The reduced NADH is then exchanged with the second NAD, and the thioester is attacked by a nucleophilic inorganic phosphate to produce BPG. This is Glyceraldehyde-3-phosphate dehydrogenase 2 (gapA2) from Staphylococcus aureus (strain MRSA252).